We begin with the raw amino-acid sequence, 206 residues long: Small ribosomal subunit protein uS4 (206 aa).

Residues 96–156 (TRLDNVVYRM…EKSQKQARIK (61 aa)) form the S4 RNA-binding domain.

This sequence belongs to the universal ribosomal protein uS4 family. In terms of assembly, part of the 30S ribosomal subunit. Contacts protein S5. The interaction surface between S4 and S5 is involved in control of translational fidelity.

Its function is as follows. One of the primary rRNA binding proteins, it binds directly to 16S rRNA where it nucleates assembly of the body of the 30S subunit. Functionally, with S5 and S12 plays an important role in translational accuracy. The protein is Small ribosomal subunit protein uS4 of Shewanella loihica (strain ATCC BAA-1088 / PV-4).